Reading from the N-terminus, the 155-residue chain is Ribosomal RNA large subunit methyltransferase H (155 aa).

S-adenosyl-L-methionine is bound by residues Leu73, Gly104, and 123–128; that span reads LSPLTL.

The protein belongs to the RNA methyltransferase RlmH family. In terms of assembly, homodimer.

Its subcellular location is the cytoplasm. It catalyses the reaction pseudouridine(1915) in 23S rRNA + S-adenosyl-L-methionine = N(3)-methylpseudouridine(1915) in 23S rRNA + S-adenosyl-L-homocysteine + H(+). In terms of biological role, specifically methylates the pseudouridine at position 1915 (m3Psi1915) in 23S rRNA. This chain is Ribosomal RNA large subunit methyltransferase H, found in Pseudomonas putida (strain W619).